Reading from the N-terminus, the 437-residue chain is Repulsive guidance molecule B (437 aa).

The signal sequence occupies residues Met1–Ala45. N-linked (GlcNAc...) asparagine glycosylation is present at Asn120. The span at Cys121–Glu133 shows a compositional bias: polar residues. Residues Cys121–Gly153 form a disordered region. 2 disulfides stabilise this stretch: Cys139–Cys226 and Cys163–Cys312. N-linked (GlcNAc...) asparagine glycosylation is present at Asn383. Asn413 is lipidated: GPI-anchor amidated asparagine. The propeptide at Gly414 to Leu437 is removed in mature form.

The protein belongs to the repulsive guidance molecule (RGM) family. Homooligomer. Interacts with DRGX. Interacts with BMP2 and BMP4. Interacts with the BMP type I receptors ACVR1, BMPR1A and BMPR1B and with the BMP type II receptor ACVR2B. The functional complex with its receptor NEO1/neogenin appears to be a heterotetramer with a 2:2 stoichiometry, RGM molecules acting as staples that bring two NEO1 receptors together without interacting themselves, this arrangement leads to activation of downstream signaling via RhoA. In terms of processing, GPI-anchored. Post-translationally, autocatalytically cleaved at low pH; the two chains remain linked via two disulfide bonds.

The protein localises to the cell membrane. Its subcellular location is the membrane raft. Functionally, member of the repulsive guidance molecule (RGM) family that contributes to the patterning of the developing nervous system. Acts as a bone morphogenetic protein (BMP) coreceptor that potentiates BMP signaling. Promotes neuronal adhesion. May inhibit neurite outgrowth. In Homo sapiens (Human), this protein is Repulsive guidance molecule B.